The primary structure comprises 216 residues: Regulatory protein RecX (216 aa).

It belongs to the RecX family.

The protein resides in the cytoplasm. Functionally, modulates RecA activity. The protein is Regulatory protein RecX of Clostridium tetani (strain Massachusetts / E88).